Reading from the N-terminus, the 438-residue chain is 3-phosphoshikimate 1-carboxyvinyltransferase (438 aa).

Positions 23, 24, and 28 each coordinate 3-phosphoshikimate. Lysine 23 is a binding site for phosphoenolpyruvate. 2 residues coordinate phosphoenolpyruvate: glycine 94 and arginine 122. Positions 167, 169, 321, and 348 each coordinate 3-phosphoshikimate. Glutamine 169 is a phosphoenolpyruvate binding site. The active-site Proton acceptor is aspartate 321. Residues arginine 352 and arginine 393 each coordinate phosphoenolpyruvate.

The protein belongs to the EPSP synthase family. As to quaternary structure, monomer.

Its subcellular location is the cytoplasm. The catalysed reaction is 3-phosphoshikimate + phosphoenolpyruvate = 5-O-(1-carboxyvinyl)-3-phosphoshikimate + phosphate. It participates in metabolic intermediate biosynthesis; chorismate biosynthesis; chorismate from D-erythrose 4-phosphate and phosphoenolpyruvate: step 6/7. Functionally, catalyzes the transfer of the enolpyruvyl moiety of phosphoenolpyruvate (PEP) to the 5-hydroxyl of shikimate-3-phosphate (S3P) to produce enolpyruvyl shikimate-3-phosphate and inorganic phosphate. In Helicobacter hepaticus (strain ATCC 51449 / 3B1), this protein is 3-phosphoshikimate 1-carboxyvinyltransferase.